The following is a 120-amino-acid chain: Large ribosomal subunit protein bL20 (120 aa).

This sequence belongs to the bacterial ribosomal protein bL20 family.

In terms of biological role, binds directly to 23S ribosomal RNA and is necessary for the in vitro assembly process of the 50S ribosomal subunit. It is not involved in the protein synthesizing functions of that subunit. This chain is Large ribosomal subunit protein bL20, found in Ureaplasma urealyticum serovar 10 (strain ATCC 33699 / Western).